The primary structure comprises 347 residues: Adenine deaminase (347 aa).

Zn(2+)-binding residues include histidine 16, histidine 18, and histidine 204. The active-site Proton donor is glutamate 207. Aspartate 285 contacts Zn(2+). Substrate is bound at residue aspartate 286.

Belongs to the metallo-dependent hydrolases superfamily. Adenosine and AMP deaminases family. Adenine deaminase type 2 subfamily. Zn(2+) is required as a cofactor.

It is found in the cytoplasm. It localises to the nucleus. It catalyses the reaction adenine + H2O + H(+) = hypoxanthine + NH4(+). In terms of biological role, catalyzes the hydrolytic deamination of adenine to hypoxanthine. Plays an important role in the purine salvage pathway and in nitrogen catabolism. This is Adenine deaminase from Candida glabrata (strain ATCC 2001 / BCRC 20586 / JCM 3761 / NBRC 0622 / NRRL Y-65 / CBS 138) (Yeast).